Reading from the N-terminus, the 177-residue chain is Large ribosomal subunit protein uL6 (177 aa).

This sequence belongs to the universal ribosomal protein uL6 family. In terms of assembly, part of the 50S ribosomal subunit.

This protein binds to the 23S rRNA, and is important in its secondary structure. It is located near the subunit interface in the base of the L7/L12 stalk, and near the tRNA binding site of the peptidyltransferase center. This chain is Large ribosomal subunit protein uL6, found in Nitrosospira multiformis (strain ATCC 25196 / NCIMB 11849 / C 71).